A 165-amino-acid polypeptide reads, in one-letter code: E3 ubiquitin-protein ligase RNF181 (165 aa).

An RING-type; atypical zinc finger spans residues 88 to 129 (CPVCLLEFEAEETVIEMPCHHLFHSNCILPWLSKTNSCPLCR). The segment at 136–165 (DDSYEEHKKDKARRQQQQHRLENLHGAMYT) is disordered. Thr-165 is subject to Phosphothreonine.

This sequence belongs to the RNF181 family. In terms of assembly, directly interacts with ITGA2B and, as a result, with integrin ITGA2B/ITGB3. There is no evidence that integrin ITGA2B/ITGB3 is an endogenous substrate for RNF181-directed ubiquitination. In terms of processing, auto-ubiquitinated as part of the enzymatic reaction.

The enzyme catalyses S-ubiquitinyl-[E2 ubiquitin-conjugating enzyme]-L-cysteine + [acceptor protein]-L-lysine = [E2 ubiquitin-conjugating enzyme]-L-cysteine + N(6)-ubiquitinyl-[acceptor protein]-L-lysine.. Its pathway is protein modification; protein ubiquitination. Functionally, E3 ubiquitin-protein ligase which accepts ubiquitin from an E2 ubiquitin-conjugating enzyme in the form of a thioester and then directly transfers the ubiquitin to targeted substrates. Catalyzes monoubiquitination of 26S proteasome subunit PSMC2/RPT1. In Mus musculus (Mouse), this protein is E3 ubiquitin-protein ligase RNF181.